We begin with the raw amino-acid sequence, 427 residues long: Gamma-glutamyl phosphate reductase (427 aa).

This sequence belongs to the gamma-glutamyl phosphate reductase family.

Its subcellular location is the cytoplasm. It catalyses the reaction L-glutamate 5-semialdehyde + phosphate + NADP(+) = L-glutamyl 5-phosphate + NADPH + H(+). Its pathway is amino-acid biosynthesis; L-proline biosynthesis; L-glutamate 5-semialdehyde from L-glutamate: step 2/2. In terms of biological role, catalyzes the NADPH-dependent reduction of L-glutamate 5-phosphate into L-glutamate 5-semialdehyde and phosphate. The product spontaneously undergoes cyclization to form 1-pyrroline-5-carboxylate. The sequence is that of Gamma-glutamyl phosphate reductase from Brucella canis (strain ATCC 23365 / NCTC 10854 / RM-666).